Consider the following 193-residue polypeptide: Imidazoleglycerol-phosphate dehydratase (193 aa).

Belongs to the imidazoleglycerol-phosphate dehydratase family.

Its subcellular location is the cytoplasm. It catalyses the reaction D-erythro-1-(imidazol-4-yl)glycerol 3-phosphate = 3-(imidazol-4-yl)-2-oxopropyl phosphate + H2O. Its pathway is amino-acid biosynthesis; L-histidine biosynthesis; L-histidine from 5-phospho-alpha-D-ribose 1-diphosphate: step 6/9. The chain is Imidazoleglycerol-phosphate dehydratase from Saccharolobus islandicus (strain Y.G.57.14 / Yellowstone #1) (Sulfolobus islandicus).